The sequence spans 252 residues: Vitamin B12 import ATP-binding protein BtuD (252 aa).

The ABC transporter domain maps to 2–237 (IQIKSLSVGA…EQLESVFNTQ (236 aa)). ATP is bound at residue 30–37 (GPNGSGKS).

The protein belongs to the ABC transporter superfamily. Vitamin B12 importer (TC 3.A.1.13.1) family. As to quaternary structure, the complex is composed of two ATP-binding proteins (BtuD), two transmembrane proteins (BtuC) and a solute-binding protein (BtuF).

The protein localises to the cell inner membrane. The catalysed reaction is an R-cob(III)alamin(out) + ATP + H2O = an R-cob(III)alamin(in) + ADP + phosphate + H(+). Part of the ABC transporter complex BtuCDF involved in vitamin B12 import. Responsible for energy coupling to the transport system. The polypeptide is Vitamin B12 import ATP-binding protein BtuD (Vibrio atlanticus (strain LGP32) (Vibrio splendidus (strain Mel32))).